Reading from the N-terminus, the 346-residue chain is Phosphoribosylformylglycinamidine cyclo-ligase (346 aa).

The protein belongs to the AIR synthase family.

It is found in the cytoplasm. It carries out the reaction 2-formamido-N(1)-(5-O-phospho-beta-D-ribosyl)acetamidine + ATP = 5-amino-1-(5-phospho-beta-D-ribosyl)imidazole + ADP + phosphate + H(+). Its pathway is purine metabolism; IMP biosynthesis via de novo pathway; 5-amino-1-(5-phospho-D-ribosyl)imidazole from N(2)-formyl-N(1)-(5-phospho-D-ribosyl)glycinamide: step 2/2. This is Phosphoribosylformylglycinamidine cyclo-ligase from Erwinia tasmaniensis (strain DSM 17950 / CFBP 7177 / CIP 109463 / NCPPB 4357 / Et1/99).